We begin with the raw amino-acid sequence, 51 residues long: Large ribosomal subunit protein bL33 (51 aa).

The protein belongs to the bacterial ribosomal protein bL33 family.

The polypeptide is Large ribosomal subunit protein bL33 (Nitrosococcus oceani (strain ATCC 19707 / BCRC 17464 / JCM 30415 / NCIMB 11848 / C-107)).